The primary structure comprises 801 residues: Phenylalanine--tRNA ligase beta subunit (801 aa).

Positions 39-153 (AEGLSKLVVG…DEAVPGDAIF (115 aa)) constitute a tRNA-binding domain. One can recognise a B5 domain in the interval 406-481 (TEPVEVSTNL…RIYGYDKLPT (76 aa)). Mg(2+) is bound by residues aspartate 459, aspartate 465, glutamate 468, and glutamate 469. Positions 708–801 (TKFPAMTRDI…LTEQVGAEVR (94 aa)) constitute an FDX-ACB domain.

The protein belongs to the phenylalanyl-tRNA synthetase beta subunit family. Type 1 subfamily. As to quaternary structure, tetramer of two alpha and two beta subunits. It depends on Mg(2+) as a cofactor.

It localises to the cytoplasm. The catalysed reaction is tRNA(Phe) + L-phenylalanine + ATP = L-phenylalanyl-tRNA(Phe) + AMP + diphosphate + H(+). This Streptococcus pyogenes serotype M3 (strain SSI-1) protein is Phenylalanine--tRNA ligase beta subunit.